Reading from the N-terminus, the 383-residue chain is Outer membrane protein assembly factor BamB (383 aa).

Positions 1-23 (MMLLKRCNRRALVALAAVLLLAA) are cleaved as a signal peptide. Residue C24 is the site of N-palmitoyl cysteine attachment. C24 carries S-diacylglycerol cysteine lipidation.

This sequence belongs to the BamB family. In terms of assembly, part of the Bam complex.

The protein localises to the cell outer membrane. In terms of biological role, part of the outer membrane protein assembly complex, which is involved in assembly and insertion of beta-barrel proteins into the outer membrane. In Alkalilimnicola ehrlichii (strain ATCC BAA-1101 / DSM 17681 / MLHE-1), this protein is Outer membrane protein assembly factor BamB.